A 226-amino-acid chain; its full sequence is Elongation factor 1-delta 2 (226 aa).

The interval 82 to 131 (TACSVSPTADQKAPAADEEDDDDVDLFGEETEEEKKAAEERAAAVKASGK) is disordered. A compositionally biased stretch (acidic residues) spans 97–113 (ADEEDDDDVDLFGEETE). Residues 114–124 (EEKKAAEERAA) are compositionally biased toward basic and acidic residues.

It belongs to the EF-1-beta/EF-1-delta family. EF-1 is composed of 4 subunits: alpha, beta (1B-alpha=beta'), delta (1B-beta), and gamma (1B-gamma).

Functionally, EF-1-beta and EF-1-beta' stimulate the exchange of GDP bound to EF-1-alpha to GTP. In Oryza sativa subsp. japonica (Rice), this protein is Elongation factor 1-delta 2.